Consider the following 483-residue polypeptide: Probable zinc metalloprotease PTT_08196 (483 aa).

Positions 1 to 18 (MLFRSVILSNALLLPACA) are cleaved as a signal peptide. 2 N-linked (GlcNAc...) asparagine glycosylation sites follow: asparagine 96 and asparagine 121. Zn(2+) contacts are provided by histidine 167, aspartate 187, and glutamate 220. Asparagine 235 carries N-linked (GlcNAc...) asparagine glycosylation. Aspartate 247 is a binding site for Zn(2+). 5 N-linked (GlcNAc...) asparagine glycosylation sites follow: asparagine 310, asparagine 362, asparagine 401, asparagine 411, and asparagine 421. Positions 396–483 (PAMPRNVTID…KSPAVYPFPA (88 aa)) constitute a Fibronectin type-III domain.

This sequence belongs to the peptidase M28 family. M28B subfamily. It depends on Zn(2+) as a cofactor.

The protein localises to the secreted. The polypeptide is Probable zinc metalloprotease PTT_08196 (Pyrenophora teres f. teres (strain 0-1) (Barley net blotch fungus)).